The primary structure comprises 523 residues: Cytochrome P450 monooxygenase ple1 (523 aa).

The helical transmembrane segment at 9–29 threads the bilayer; sequence ALPVLAIWAAIGLAYWIDSQK. The N-linked (GlcNAc...) asparagine glycan is linked to N141. C444 contacts heme.

This sequence belongs to the cytochrome P450 family. The cofactor is heme.

The protein localises to the membrane. It functions in the pathway secondary metabolite biosynthesis; terpenoid biosynthesis. In terms of biological role, cytochrome P450 monooxygenase; part of the gene cluster that mediates the biosynthesis of pleuromutilin, a tricyclic diterpene showing antibacterial properties. The geranylgeranyl diphosphate (GGPP) synthase ple4 catalyzes the first step in pleuromutilin biosynthesis. GGPP is then substrate of the premutilin synthase (PS) ple3 to yield premutilin. Premutilin synthase is a bifunctional enzyme composed of the fusion of a class II diterpene cyclase (DTC) and a class I diterpene synthase (DTS), with the corresponding domains and active sites containing characteristic aspartate-rich motifs. GGPP is first converted to mutildienyl-diphosphate (MPP) at the class II DTC site. MPP is subsequently further cyclized at the class I DTS site, followed by a 1,5-hydride shift and addition of water prior to terminating deprotonation, to yield premutilin. The cytochrome P450 monooxygenases ple5 and ple6 hydroxylate premutilin at C-11 and C-3, respectively, producing 11-hydroxypremutilin and 3-hydroxypremutilin. The combination of the actions of both ple5 and ple6 leads to the production of 3,11-dihydroxypremutilin. The short chain dehydrogenase ple7 further converts 3,11-dihydroxypremutilin into mutilin. The acetyltransferase ple2 then acetylates mutilin to produce 14-O-acetylmutilin. Finally, the cytochrome P450 monooxygenase ple1 catalyzes hydroxylation on the alpha position of the acetyl side chain of 14-O-acetylmutilin to yield pleuromutilin. The chain is Cytochrome P450 monooxygenase ple1 from Rhodocybe pseudopiperita (Clitopilus pseudopiperitus).